The chain runs to 91 residues: Elongation factor 1-beta (91 aa).

The protein belongs to the EF-1-beta/EF-1-delta family.

Promotes the exchange of GDP for GTP in EF-1-alpha/GDP, thus allowing the regeneration of EF-1-alpha/GTP that could then be used to form the ternary complex EF-1-alpha/GTP/AAtRNA. The sequence is that of Elongation factor 1-beta from Thermofilum pendens (strain DSM 2475 / Hrk 5).